Here is a 339-residue protein sequence, read N- to C-terminus: Anthranilate phosphoribosyltransferase (339 aa).

Residues glycine 81, 84–85, serine 89, 91–94, 109–117, and alanine 121 each bind 5-phospho-alpha-D-ribose 1-diphosphate; these read GD, NVST, and KHGNRALSS. Glycine 81 lines the anthranilate pocket. Serine 93 lines the Mg(2+) pocket. Asparagine 112 is an anthranilate binding site. Arginine 167 lines the anthranilate pocket. Residues aspartate 226 and glutamate 227 each contribute to the Mg(2+) site.

The protein belongs to the anthranilate phosphoribosyltransferase family. Homodimer. The cofactor is Mg(2+).

The catalysed reaction is N-(5-phospho-beta-D-ribosyl)anthranilate + diphosphate = 5-phospho-alpha-D-ribose 1-diphosphate + anthranilate. The protein operates within amino-acid biosynthesis; L-tryptophan biosynthesis; L-tryptophan from chorismate: step 2/5. Its function is as follows. Catalyzes the transfer of the phosphoribosyl group of 5-phosphorylribose-1-pyrophosphate (PRPP) to anthranilate to yield N-(5'-phosphoribosyl)-anthranilate (PRA). This is Anthranilate phosphoribosyltransferase from Rhodopseudomonas palustris (strain BisA53).